Here is a 429-residue protein sequence, read N- to C-terminus: UDP-N-acetylglucosamine 1-carboxyvinyltransferase (429 aa).

Residue 22-23 (KN) participates in phosphoenolpyruvate binding. Arg102 contacts UDP-N-acetyl-alpha-D-glucosamine. Residue Cys126 is the Proton donor of the active site. At Cys126 the chain carries 2-(S-cysteinyl)pyruvic acid O-phosphothioketal. UDP-N-acetyl-alpha-D-glucosamine contacts are provided by residues 131-135 (RPVDL), Asp316, and Ile338.

Belongs to the EPSP synthase family. MurA subfamily.

It is found in the cytoplasm. It carries out the reaction phosphoenolpyruvate + UDP-N-acetyl-alpha-D-glucosamine = UDP-N-acetyl-3-O-(1-carboxyvinyl)-alpha-D-glucosamine + phosphate. It functions in the pathway cell wall biogenesis; peptidoglycan biosynthesis. Its function is as follows. Cell wall formation. Adds enolpyruvyl to UDP-N-acetylglucosamine. This Methylocella silvestris (strain DSM 15510 / CIP 108128 / LMG 27833 / NCIMB 13906 / BL2) protein is UDP-N-acetylglucosamine 1-carboxyvinyltransferase.